Here is a 236-residue protein sequence, read N- to C-terminus: 2,3,4,5-tetrahydropyridine-2,6-dicarboxylate N-acetyltransferase (236 aa).

The protein belongs to the transferase hexapeptide repeat family. DapH subfamily.

It carries out the reaction (S)-2,3,4,5-tetrahydrodipicolinate + acetyl-CoA + H2O = L-2-acetamido-6-oxoheptanedioate + CoA. It participates in amino-acid biosynthesis; L-lysine biosynthesis via DAP pathway; LL-2,6-diaminopimelate from (S)-tetrahydrodipicolinate (acetylase route): step 1/3. In terms of biological role, catalyzes the transfer of an acetyl group from acetyl-CoA to tetrahydrodipicolinate. This Geobacillus sp. (strain WCH70) protein is 2,3,4,5-tetrahydropyridine-2,6-dicarboxylate N-acetyltransferase.